The sequence spans 168 residues: S-ribosylhomocysteine lyase (168 aa).

The Fe cation site is built by His-54, His-58, and Cys-128.

The protein belongs to the LuxS family. In terms of assembly, homodimer. Requires Fe cation as cofactor.

It catalyses the reaction S-(5-deoxy-D-ribos-5-yl)-L-homocysteine = (S)-4,5-dihydroxypentane-2,3-dione + L-homocysteine. Its function is as follows. Involved in the synthesis of autoinducer 2 (AI-2) which is secreted by bacteria and is used to communicate both the cell density and the metabolic potential of the environment. The regulation of gene expression in response to changes in cell density is called quorum sensing. Catalyzes the transformation of S-ribosylhomocysteine (RHC) to homocysteine (HC) and 4,5-dihydroxy-2,3-pentadione (DPD). In Histophilus somni (strain 129Pt) (Haemophilus somnus), this protein is S-ribosylhomocysteine lyase.